The chain runs to 363 residues: S-adenosylmethionine:tRNA ribosyltransferase-isomerase (363 aa).

This sequence belongs to the QueA family. Monomer.

The protein resides in the cytoplasm. The enzyme catalyses 7-aminomethyl-7-carbaguanosine(34) in tRNA + S-adenosyl-L-methionine = epoxyqueuosine(34) in tRNA + adenine + L-methionine + 2 H(+). It functions in the pathway tRNA modification; tRNA-queuosine biosynthesis. Functionally, transfers and isomerizes the ribose moiety from AdoMet to the 7-aminomethyl group of 7-deazaguanine (preQ1-tRNA) to give epoxyqueuosine (oQ-tRNA). This Brucella anthropi (strain ATCC 49188 / DSM 6882 / CCUG 24695 / JCM 21032 / LMG 3331 / NBRC 15819 / NCTC 12168 / Alc 37) (Ochrobactrum anthropi) protein is S-adenosylmethionine:tRNA ribosyltransferase-isomerase.